The primary structure comprises 602 residues: Auxin response factor 18 (602 aa).

The segment at residues 128-230 (FVKILTASDT…DLRVGVRRLA (103 aa)) is a DNA-binding region (TF-B3). The interval 359 to 396 (TSPISTPAQQPQSKCKRSRPIEPSVKTPAPPSFLYSLP) is disordered. Positions 360-371 (SPISTPAQQPQS) are enriched in polar residues. A PB1 domain is found at 489-581 (RSRTKVQMQG…EVKKMTTKLK (93 aa)).

The protein belongs to the ARF family. As to quaternary structure, homodimers and heterodimers.

It localises to the nucleus. Functionally, auxin response factors (ARFs) are transcriptional factors that bind specifically to the DNA sequence 5'-TGTCTC-3' found in the auxin-responsive promoter elements (AuxREs). Could act as transcriptional activator or repressor. Formation of heterodimers with Aux/IAA proteins may alter their ability to modulate early auxin response genes expression. This chain is Auxin response factor 18 (ARF18), found in Arabidopsis thaliana (Mouse-ear cress).